The sequence spans 173 residues: Small ribosomal subunit protein uS5 (173 aa).

Positions 17 to 80 (WQERVIQIRR…ADGKKQLIDV (64 aa)) constitute an S5 DRBM domain.

It belongs to the universal ribosomal protein uS5 family. As to quaternary structure, part of the 30S ribosomal subunit. Contacts proteins S4 and S8.

Functionally, with S4 and S12 plays an important role in translational accuracy. Its function is as follows. Located at the back of the 30S subunit body where it stabilizes the conformation of the head with respect to the body. This Rippkaea orientalis (strain PCC 8801 / RF-1) (Cyanothece sp. (strain PCC 8801)) protein is Small ribosomal subunit protein uS5.